The primary structure comprises 626 residues: Nuclear receptor subfamily 4 group A member 3 (626 aa).

The activation function (AF)-1 domain stretch occupies residues 1–108; it reads MPCVQAQYSP…HHHHHHHHHH (108 aa). Residues 1-138 form a required for DNA-PK heterotrimer region; that stretch reads MPCVQAQYSP…PSTSMYFKQS (138 aa). Residues 1–291 are interaction with NCOA1, NCOA2, NCOA3 and KAT2B; it reads MPCVQAQYSP…SRSSSSGEGT (291 aa). Disordered regions lie at residues 92-152, 192-211, and 265-284; these read PSYH…PPQA, HFKP…GHHL, and PTAS…PSRS. The span at 93–110 shows a compositional bias: basic residues; it reads SYHHHHHHHHHHHHHHQQ. 2 stretches are compositionally biased toward pro residues: residues 140-149 and 195-204; these read PSTPTTPAFP and PSPPHPPAPS. A compositionally biased stretch (low complexity) spans 268–284; sequence SSLLGESPSLPSPPSRS. The segment at residues 289 to 364 is a DNA-binding region (nuclear receptor); that stretch reads EGTCAVCGDN…VGMVKEVVRT (76 aa). NR C4-type zinc fingers lie at residues 292–312 and 328–352; these read CAVC…CEGC and CLAN…FQKC. Positions 364-394 are disordered; sequence TDSLKGRRGRLPSKPKSPLQQEPSQPSPPSP. The span at 377-387 shows a compositional bias: low complexity; it reads KPKSPLQQEPS. Residues 379 to 626 form an interaction with KAT2B region; that stretch reads KSPLQQEPSQ…DKLFLDTLPF (248 aa). The 230-residue stretch at 394–623 folds into the NR LBD domain; the sequence is PPICMMNALV…SIIDKLFLDT (230 aa).

It belongs to the nuclear hormone receptor family. NR4 subfamily. As to quaternary structure, interacts with SIX3 (via homeobox); differentially regulates the transcriptional activities of NR4A3. Interacts with the constituents of DNA-PK heterotrimer PRKDC, XRCC6 and XRCC5; phosphorylates and prevents NR4A3 ubiquitinylation and degradation. Interacts with NCOA2; potentiates the activity of the NR4A3. Interacts with NCOA1, NCOA3, MED1 and KAT2B. Interacts with EP300 and NCOA2; mediates the recruitment of MED1 in the coactivator complex. Interacts with NR3C1 (via nuclear receptor DNA-binding domain); the interactions represses transcription activity of NR4A3 on the POMC promoter Nur response element (NurRE). Interacts with TRIM28; the interactions potentiates NR4A3 activity on NurRE promoter. Binds DNA as a monomer and homodimer. Interacts with PARP1; activates PARP1 by improving acetylation of PARP1 and suppressing the interaction between PARP1 and SIRT1. Post-translationally, phosphorylated by PRKDC. Isoform alpha is highly expressed in skeletal muscle. Isoform beta is highly expressed in skeletal muscle and low expressed in fetal brain and placenta.

It localises to the nucleus. In terms of biological role, transcriptional activator that binds to regulatory elements in promoter regions in a cell- and response element (target)-specific manner. Induces gene expression by binding as monomers to the NR4A1 response element (NBRE) 5'-AAAAGGTCA-3' site and as homodimers to the Nur response element (NurRE) site in the promoter of their regulated target genes. Plays a role in the regulation of proliferation, survival and differentiation of many different cell types and also in metabolism and inflammation. Mediates proliferation of vascular smooth muscle, myeloid progenitor cell and type B pancreatic cells; promotes mitogen-induced vascular smooth muscle cell proliferation through transactivation of SKP2 promoter by binding a NBRE site. Upon PDGF stimulation, stimulates vascular smooth muscle cell proliferation by regulating CCND1 and CCND2 expression. In islets, induces type B pancreatic cell proliferation through up-regulation of genes that activate cell cycle, as well as genes that cause degradation of the CDKN1A. Negatively regulates myeloid progenitor cell proliferation by repressing RUNX1 in a NBRE site-independent manner. During inner ear, plays a role as a key mediator of the proliferative growth phase of semicircular canal development. Also mediates survival of neuron and smooth muscle cells; mediates CREB-induced neuronal survival, and during hippocampus development, plays a critical role in pyramidal cell survival and axonal guidance. Is required for S phase entry of the cell cycle and survival of smooth muscle cells by inducing CCND1, resulting in RB1 phosphorylation. Binds to NBRE motif in CCND1 promoter, resulting in the activation of the promoter and CCND1 transcription. Also plays a role in inflammation; upon TNF stimulation, mediates monocyte adhesion by inducing the expression of VCAM1 and ICAM1 by binding to the NBRE consensus site. In mast cells activated by Fc-epsilon receptor cross-linking, promotes the synthesis and release of cytokines but impairs events leading to degranulation. Also plays a role in metabolism; by modulating feeding behavior; and by playing a role in energy balance by inhibiting the glucocorticoid-induced orexigenic neuropeptides AGRP expression, at least in part by forming a complex with activated NR3C1 on the AGRP- glucocorticoid response element (GRE), and thus weakening the DNA binding activity of NR3C1. Upon catecholamines stimulation, regulates gene expression that controls oxidative metabolism in skeletal muscle. Plays a role in glucose transport by regulating translocation of the SLC2A4 glucose transporter to the cell surface. Finally, during gastrulation plays a crucial role in the formation of anterior mesoderm by controlling cell migration. Inhibits adipogenesis. Also participates in cardiac hypertrophy by activating PARP1. This is Nuclear receptor subfamily 4 group A member 3 (NR4A3) from Homo sapiens (Human).